The following is a 1113-amino-acid chain: StAR-related lipid transfer protein 13 (1113 aa).

N-acetylmethionine is present on M1. The region spanning 55 to 122 is the SAM domain; that stretch reads QQEIEAKEAC…LNKCASMKLD (68 aa). Disordered stretches follow at residues 162–254 and 307–346; these read LLPR…PTRA and PNGDLQNSPPPACRKGLPCSGKSSGESSPSEHSSSGVSTP. Residues 177-188 show a composition bias toward polar residues; that stretch reads MRNTTSSESVLT. 2 stretches are compositionally biased toward low complexity: residues 197-213 and 326-344; these read SIHSESSGGSDSRSQPG and SGKSSGESSPSEHSSSGVS. Phosphoserine is present on S411. The span at 536–549 shows a compositional bias: polar residues; it reads FEGNSVSEGRTTPS. Residues 536–580 are disordered; it reads FEGNSVSEGRTTPSDVERDVTSLNESEPPGVRDRRDSGVGASLTR. The region spanning 663 to 868 is the Rho-GAP domain; sequence VPLIVHVQRT…HMIMECDRLF (206 aa). Residues 899–1107 form the START domain; sequence LEESGATFHT…RNSFQPLIAE (209 aa).

In terms of assembly, homodimer. Interacts with TAX1BP1. As to expression, ubiquitously expressed. Underexpressed in hepatocellular carcinoma cells and some breast cancer cell lines.

It is found in the cytoplasm. The protein localises to the membrane. The protein resides in the mitochondrion membrane. It localises to the lipid droplet. GTPase-activating protein for RhoA, and perhaps for Cdc42. May be involved in regulation of cytoskeletal reorganization, cell proliferation and cell motility. Acts a tumor suppressor in hepatocellular carcinoma cells. This is StAR-related lipid transfer protein 13 (STARD13) from Homo sapiens (Human).